We begin with the raw amino-acid sequence, 963 residues long: Protocadherin alpha-C1 (963 aa).

Residues 1–18 (MVGCGVAVLCLWVSCGAA) form the signal peptide. 5 consecutive Cadherin domains span residues 19–124 (AGQL…SPLF), 125–233 (PAGD…APVF), 234–340 (ERSV…APEL), 349–445 (VPED…TPNF), and 446–555 (PQPQ…YPVI). Over 19-683 (AGQLEYSVPE…GGQLSAQNLY (665 aa)) the chain is Extracellular. N-linked (GlcNAc...) asparagine glycosylation occurs at asparagine 38. N-linked (GlcNAc...) asparagine glycosylation is found at asparagine 248 and asparagine 274. The N-linked (GlcNAc...) asparagine glycan is linked to asparagine 562. A Cadherin 6 domain is found at 570–667 (VPRSARTGHL…NSVPQLLPDF (98 aa)). The chain crosses the membrane as a helical span at residues 684-704 (LVIALACISFLFLGCLLFFVC). The Cytoplasmic segment spans residues 705 to 963 (TKLHQSPGCC…GNSTTDNSDQ (259 aa)). PXXP repeat units follow at residues 812–815 (PRQP), 845–848 (PGGP), 886–889 (PGNP), and 904–907 (PGSP). Positions 812 to 907 (PRQPNPDWRY…PDKFIIPGSP (96 aa)) are 4 X 4 AA repeats of P-X-X-P. Residues 844–963 (GPGGPDQQWP…GNSTTDNSDQ (120 aa)) are disordered. Residues 922–936 (DKSDFITFGKKEETK) are compositionally biased toward basic and acidic residues.

It localises to the cell membrane. Potential calcium-dependent cell-adhesion protein. May be involved in the establishment and maintenance of specific neuronal connections in the brain. The sequence is that of Protocadherin alpha-C1 (PCDHAC1) from Homo sapiens (Human).